The following is a 181-amino-acid chain: Large ribosomal subunit protein uL5 (181 aa).

This sequence belongs to the universal ribosomal protein uL5 family. Part of the 50S ribosomal subunit; part of the 5S rRNA/L5/L18/L25 subcomplex. Contacts the 5S rRNA and the P site tRNA. Forms a bridge to the 30S subunit in the 70S ribosome.

Functionally, this is one of the proteins that bind and probably mediate the attachment of the 5S RNA into the large ribosomal subunit, where it forms part of the central protuberance. In the 70S ribosome it contacts protein S13 of the 30S subunit (bridge B1b), connecting the 2 subunits; this bridge is implicated in subunit movement. Contacts the P site tRNA; the 5S rRNA and some of its associated proteins might help stabilize positioning of ribosome-bound tRNAs. This chain is Large ribosomal subunit protein uL5, found in Rickettsia canadensis (strain McKiel).